The primary structure comprises 342 residues: Succinylglutamate desuccinylase (342 aa).

Residues H62, E65, and H158 each coordinate Zn(2+). E222 is an active-site residue.

This sequence belongs to the AspA/AstE family. Succinylglutamate desuccinylase subfamily. The cofactor is Zn(2+).

It catalyses the reaction N-succinyl-L-glutamate + H2O = L-glutamate + succinate. It participates in amino-acid degradation; L-arginine degradation via AST pathway; L-glutamate and succinate from L-arginine: step 5/5. Transforms N(2)-succinylglutamate into succinate and glutamate. The protein is Succinylglutamate desuccinylase of Shewanella frigidimarina (strain NCIMB 400).